Consider the following 3843-residue polypeptide: MVVSAGPWSSEKAEMNILEINETLRPQLAEKKQQFRNLKEKCFLTQLAGFLANRQKKYKYEECKDLIKFMLRNERQFKEEKLAEQLKQAEELRQYKVLFHSQERELTQLREKLREGRDASRSLNEHLQALLTPDEPDKSQGQDLQEQLAEGCRLAQHLVQKLSPENDNDDDEDVQVEVAEKVQKSSAPREMQKAEEKEVPEDSLEECAITYSNSHGPYDSNQPHRKTKITFEEDKVDSTLIGSSSHVEWEDAVHIIPENESDDEEEEEKGPVSPRNLQESEEEEVPQESWDEGYSTLSIPPEMLASYQSYSSTFHSLEEQQVCMAVDIGRHRWDQVKKEDQEATGPRLSRELLDEKGPEVLQDSLDRCYSTPSGCLELTDSCQPYRSAFYVLEQQRVGLAIDMDEIEKYQEVEEDQDPSCPRLSRELLDEKEPEVLQDSLDRCYSIPSGYLELPDLGQPYSSAVYSLEEQYLGLALDVDRIKKDQEEEEDQDPPCPRLSRELVEVVEPEVLQDSLDRCYSTPSSCLEQPDSCQPYGSSFYALEEKHVGFSLDVGEIEKKGKGKKRRGRRSKKERRRGRKEGEEDQNPPCPRLSRELLDEKGPEVLQDSLDRCYSTPSGCLELTDSCQPYRSAFYILEQQCVGLAVDMDEIEKYQEVEEDQDPSCPRLSRELLDEKEPEVLQDSLDRCYSIPSGYLELPDLGQPYSSAVYSLEEQYLGLALDVDRIKKDQEEEEDQDPPCPRLSRELVEVVEPEVLQDSLDRCYSTPSSCLEQPDSCQPYGSSFYALEEKHVGFSLDVGEIEKKGKGKKRRGRRSKKERRRGRKEGEEDQNPPCPRLSRELLDEKGPEVLQDSLDRCYSTPSGCLELTDSCQPYRSAFYILEQQCVGLAIDMDEIEKYQEVEEDQDPSCPRLSRELLDEKEPEVLQDSLDRCYSIPSGYLELPDLGQPYSSAVYSLEEQYLGLALDVDRIKKDQEEEEDQDPPCPRLSRELVEVVEPEVLQDSLDRCYSTPSSCLEQPDSCQPYGSSFYALEEKHVGFSLDVGEIEKKGKGKKRRGRRSKKERRRGRKEGEEDQNPPCPRLSRELLDEKGPEVLQDSLDRCYSTPSGCLELTDSCQPYRSAFYILEQQCVGLAVDMDEIEKYQEVEEDQDPSCPRLSRELLDEKEPEVLQDSLDRCYSIPSGYLELPDLGQPYSSAVYSLEEQYLGLALDVDRIKKDQEEEEDQDPPCPRLSRELVEVVEPEVLQDSLDRCYSTPSSCLEQPDSCQPYGSSFYALEEKHVGFSLDVGEIEKKGKGKKRRGRRSKKERRRGRKEGEEDQNPPCPRLSRELLDEKGPEVLQDSLDRCYSTPSGCLELTDSCQPYRSAFYILEQQCVGLAVDMDEIEKYQEVEEDQDPSCPRLSRELLDEKEPEVLQDSLDRCYSIPSGYLELPDLGQPYSSAVYSLEEQYLGLALDVDRIKKDQEEEEDQDPPCPRLSRELVEVVEPEVLQDSLDRCYSTPSSCLEQPDSCQPYGSSFYALEEKHVGFSLDVGEIEKKGKGKKRRGRRSKKERRRGRKEGEEDQNPPCPRLSRELLDEKGPEVLQDSLDRCYSTPSGCLELTDSCQPYRSAFYILEQQCVGLAVDMDEIEKYQEVEEDQDPSCPRLSRELLDEKEPEVLQDSLDRCYSIPSGYLELPDLGQPYSSAVYSLEEQYLGLALDVDRIKKDQEEEEDQDPPCPRLSRELLEVVEPEVLQDSLDRCYSTPSSCLEQPDSCQPYGSSFYALEEKHVGFSLDVGEIEKKGKGKKRRGRRSKKERRRGRKEGEEDQNPPCPRLSRELLDEKGPEVLQDSLDRCYSTPSGCLELTDSCQPYRSAFYILEQQCVGLAVDMDEIEKYQEVEEDQDPSCPRLSRELLDEKEPEVLQDSLDRCYSTPSGYLELPDLGQPYSSAVYSLEEQYLGLALDVDRIKKDQEEEEDQGPPCPRLSRELLEVVEPEVLQDSLDRCYSTPSSCLEQPDSCQPYGSSFYALEEKHVGFSLDVGEIEKKGKGKKRRGRRSKKERRRGRKEGEEDQNPPCPRLSRELLDEKGPEVLQDSLDRCYSTPSGCLELTDSCQPYRSAFYILEQQCVGLAVDMDEIEKYQEVEEDQDPSCPRLSRELLDEKEPEVLQDSLDRCYSTPSGYLELPDLGQPYSSAVYSLEEQYLGLALDVDRIKKDQEEEEDQGPPCPRLSRELLEVVEPEVLQDSLDRCYSTPSSCLEQPDSCQPYGSSFYALEEKHVGFSLDVGEIEKKGKGKKRRGRRSKKERRRGRKEGEEDQNPPCPRLSRELLDEKGPEVLQDSLDRCYSTPSGCLELTDSCQPYRSAFYILEQQCVGLAVDMDEIEKYQEVEEDQDPSCPRLSRELLDEKEPEVLQDSLDRCYSTPSGYLELPDLGQPYSSAVYSLEEQYLGLALDVDRIKKDQEEEEDQGPPCPRLSRELLEVVEPEVLQDSLDRCYSTPSSCLEQPDSCQPYGSSFYALEEKHVGFSLDVGEIEKKGKGKKRRGRRSKKERRRGRKEGEEDQNPPCPRLSRELLDEKGPEVLQDSLDRCYSTPSGCLELTDSCQPYRSAFYILEQQCVGLAVDMDEIEKYQEVEEDQDPSCPRLSRELLDEKEPEVLQDSLDRCYSTPSGYLELPDLGQPYSSAVYSLEEQYLGLALDVDRIKKDQEEEEDQGPPCPRLSRELLEVVEPEVLQDSLDRCYSTPSSCLEQPDSCQPYGSSFYALEEKHVGFSLDVGEIEKKGKGKKRRGRRSKKERRRGRKEGEEDQNPPCPRLSRELLDEKGPEVLQDSLDRCYSTPSGCLELTDSCQPYRSAFYILEQQCVGLAVDMDEIEKYQEVEEDQDPSCPRLSRELLDEKEPEVLQDSLDRCYSTPSGYLELPDLGQPYSSAVYSLEEQYLGLALDVDRIKKDQEEEEDQGPPCPRLSRELLEVVEPEVLQDSLDRCYSTPSSCLEQPDSCQPYGSSFYALEEKHVGFSLDVGEIEKKGKGKKRRGRRSKKERRRGRKEGEEDQNPPCPRLSRELLDEKGPEVLQDSLDRCYSTPSGCLELTDSCQPYRSAFYILEQQCVGLAVDMDEIEKYQEVEEDQDPSCPRLSRELLAEKEPEVLQDPLDRCYSTPSGYLELPDLGQPYSSAVYSLEEQYLGLALDVDRIKKDQEEEEDQGPPCPRLSRELLEVVEPEVLQDSLDRCYSTPSSCLEQPDSCQPYGSSFYALEEKHVGFSLDVGEIEKKGKGKKRRGRRSKKERRRGRKEGEEDQNPPCPRLSRELLDEKGPEVLQDSLDRCYSTPSGCLELTDSCQPYRSAFYILEQQCVGLAVDMDEIEKYQEVEEDQDPSCPRLSRELLAEKEPEVLQDPLDRCYSTPSGYLELPDLGQPYSSAVYSLEEQYLGLALDVDRIKKDQEEEEDQGPPCPRLSRELLEVVEPEVLQDSLDRCYSTPSSCLEQPDSCQPYGSSFYALEEKHVGFSLDVGEIEKKGKGKKRRGRRSKKERRRGRKEGEEDQNPPCPRLSRELLDEKGPEVLQDSLDRCYSTPSGCLELTDSCQPYRSAFYILEQQCVGLAVDMDEIEKYQEVEEDQDPSCPRLSRELLAEKEPEVLQDPLDRCYSTPSGYLELPDLGQPYSSAVYSLEEQYLGLALDVDRIKKDQEEEEDQGPPCPRLSRELLEVVEPEVLQDSLDRCYSTPSSCLEQPDSCQPYGSSFYALEEKHVGFSLDVGEIEKKGKGKKRRGRRSKKERRRGRKEGEEDQNPPCPRLNSVLMEVEEPEVLQDSLDGCYSTPSMYFELPDSFQHYRSVFYSFEEEHISFALYLDNRFFTLTVTSLHLVFQMLVIFPQ.

Residues Met-70 to Leu-130 adopt a coiled-coil conformation. Olduvai domains lie at Glu-165–Pro-257, Glu-258–Gly-329, Arg-330–Pro-421, Ser-424–Asp-479, Arg-480–Lys-572, Glu-573–Pro-665, Ser-668–Asp-723, Arg-724–Lys-816, Glu-817–Pro-909, Ser-912–Asp-967, Arg-968–Lys-1060, Glu-1061–Pro-1153, Ser-1156–Asp-1211, Arg-1212–Lys-1304, Glu-1305–Pro-1397, Ser-1400–Asp-1455, Arg-1456–Lys-1548, Glu-1549–Pro-1641, Ser-1644–Asp-1699, Arg-1700–Lys-1792, Glu-1793–Pro-1885, Ser-1888–Asp-1943, Arg-1944–Lys-2036, Glu-2037–Pro-2129, Ser-2132–Asp-2187, Arg-2188–Lys-2280, Glu-2281–Pro-2373, Ser-2376–Asp-2431, Arg-2432–Lys-2524, Glu-2525–Pro-2617, Ser-2620–Asp-2675, Arg-2676–Lys-2768, Glu-2769–Pro-2861, Ser-2864–Asp-2919, Arg-2920–Lys-3012, Glu-3013–Pro-3105, Ser-3108–Asp-3163, Arg-3164–Lys-3256, Glu-3257–Pro-3349, Ser-3352–Asp-3407, Arg-3408–Lys-3500, Glu-3501–Pro-3593, Ser-3596–Asp-3651, Arg-3652–Lys-3744, and Glu-3745–Gln-3843. 2 disordered regions span residues Glu-180–Ser-203 and Trp-249–Ser-295. 2 stretches are compositionally biased toward acidic residues: residues Asn-259 to Glu-268 and Glu-279 to Asp-291. A disordered region spans residues Lys-559–Leu-597. The segment covering Gly-560 to Arg-578 has biased composition (basic residues). The segment at Lys-803–Leu-841 is disordered. Over residues Gly-804–Arg-822 the composition is skewed to basic residues. Positions Lys-1047 to Leu-1085 are disordered. Residues Gly-1048–Arg-1066 show a composition bias toward basic residues. The segment at Lys-1291–Leu-1329 is disordered. The span at Gly-1292 to Arg-1310 shows a compositional bias: basic residues. The interval Lys-1535–Leu-1573 is disordered. Positions Gly-1536 to Arg-1554 are enriched in basic residues. A disordered region spans residues Lys-1779–Leu-1817. A compositionally biased stretch (basic residues) spans Gly-1780–Arg-1798. Positions Lys-2023–Leu-2061 are disordered. The segment covering Gly-2024 to Arg-2042 has biased composition (basic residues). The disordered stretch occupies residues Lys-2267–Leu-2305. Over residues Gly-2268–Arg-2286 the composition is skewed to basic residues. The disordered stretch occupies residues Lys-2511–Leu-2549. Over residues Gly-2512–Arg-2530 the composition is skewed to basic residues. Positions Lys-2755 to Leu-2793 are disordered. Over residues Gly-2756–Arg-2774 the composition is skewed to basic residues. Residues Lys-2999–Leu-3037 are disordered. Residues Gly-3000–Arg-3018 are compositionally biased toward basic residues. Residues Lys-3243–Leu-3281 are disordered. Basic residues predominate over residues Gly-3244 to Arg-3262. Residues Lys-3487–Leu-3525 are disordered. The segment covering Gly-3488–Arg-3506 has biased composition (basic residues). Residues Lys-3731–Leu-3764 form a disordered region. Positions Gly-3732–Arg-3750 are enriched in basic residues.

Belongs to the NBPF family.

The protein resides in the cytoplasm. This Homo sapiens (Human) protein is NBPF family member NBPF19.